A 447-amino-acid polypeptide reads, in one-letter code: Glutamine synthetase (447 aa).

A GS beta-grasp domain is found at 20 to 105; the sequence is RDVKFIRTQF…ILGDVYLPDG (86 aa). Residues 112–447 enclose the GS catalytic domain; sequence PRYVLKTAIK…WELSRYLSML (336 aa). The Mg(2+) site is built by glutamate 135 and glutamate 137. Glutamate 187 lines the ATP pocket. Mg(2+) is bound by residues glutamate 192 and glutamate 199. Residues 243 to 244 and glycine 244 contribute to the L-glutamate site; that span reads NG. Histidine 248 serves as a coordination point for Mg(2+). Serine 252 contributes to the ATP binding site. The L-glutamate site is built by arginine 301, glutamate 307, and arginine 319. Residues arginine 319 and arginine 324 each coordinate ATP. A Mg(2+)-binding site is contributed by glutamate 336. Arginine 338 is an L-glutamate binding site.

Belongs to the glutamine synthetase family. Homohexamer. Interacts and forms stable complexes with the regulatory protein GlnK1. Requires Mg(2+) as cofactor.

It is found in the cytoplasm. It catalyses the reaction L-glutamate + NH4(+) + ATP = L-glutamine + ADP + phosphate + H(+). Its activity is regulated as follows. Directly stimulated by the effector molecule 2-oxoglutarate. Inhibited by GlnK1. 2-oxoglutarate antagonizes the inhibitory effects of GlnK1, but does not prevent GlnK1/GlnA1 complex formation. In terms of biological role, probably involved in nitrogen metabolism via ammonium assimilation. Catalyzes the ATP-dependent biosynthesis of glutamine from glutamate and ammonia. The chain is Glutamine synthetase from Methanosarcina mazei (strain ATCC BAA-159 / DSM 3647 / Goe1 / Go1 / JCM 11833 / OCM 88) (Methanosarcina frisia).